Reading from the N-terminus, the 543-residue chain is Chaperonin GroEL (543 aa).

ATP contacts are provided by residues 29–32, 86–90, G413, 478–480, and D494; these read TIGP, DGTTT, and NAA.

It belongs to the chaperonin (HSP60) family. As to quaternary structure, forms a cylinder of 14 subunits composed of two heptameric rings stacked back-to-back. Interacts with the co-chaperonin GroES.

It localises to the cytoplasm. The enzyme catalyses ATP + H2O + a folded polypeptide = ADP + phosphate + an unfolded polypeptide.. Its function is as follows. Together with its co-chaperonin GroES, plays an essential role in assisting protein folding. The GroEL-GroES system forms a nano-cage that allows encapsulation of the non-native substrate proteins and provides a physical environment optimized to promote and accelerate protein folding. The protein is Chaperonin GroEL of Limosilactobacillus fermentum (strain NBRC 3956 / LMG 18251) (Lactobacillus fermentum).